The sequence spans 105 residues: Translation initiation factor 1A (105 aa).

The S1-like domain maps to 18-92 (IRVKLPNKRI…DKCDIIYRYT (75 aa)).

This sequence belongs to the eIF-1A family.

Functionally, seems to be required for maximal rate of protein biosynthesis. Enhances ribosome dissociation into subunits and stabilizes the binding of the initiator Met-tRNA(I) to 40 S ribosomal subunits. This is Translation initiation factor 1A (eIF1A) from Methanocorpusculum labreanum (strain ATCC 43576 / DSM 4855 / Z).